We begin with the raw amino-acid sequence, 619 residues long: Isocitrate dehydrogenase kinase/phosphatase (619 aa).

Residues 354 to 360 (APGIRGM) and Lys375 contribute to the ATP site. Asp409 is an active-site residue.

Belongs to the AceK family.

The protein localises to the cytoplasm. The catalysed reaction is L-seryl-[isocitrate dehydrogenase] + ATP = O-phospho-L-seryl-[isocitrate dehydrogenase] + ADP + H(+). Its function is as follows. Bifunctional enzyme which can phosphorylate or dephosphorylate isocitrate dehydrogenase (IDH) on a specific serine residue. This is a regulatory mechanism which enables bacteria to bypass the Krebs cycle via the glyoxylate shunt in response to the source of carbon. When bacteria are grown on glucose, IDH is fully active and unphosphorylated, but when grown on acetate or ethanol, the activity of IDH declines drastically concomitant with its phosphorylation. This is Isocitrate dehydrogenase kinase/phosphatase from Bordetella bronchiseptica (strain ATCC BAA-588 / NCTC 13252 / RB50) (Alcaligenes bronchisepticus).